A 1404-amino-acid polypeptide reads, in one-letter code: DNA-directed RNA polymerase subunit beta' (1404 aa).

Zn(2+) is bound by residues cysteine 70, cysteine 72, cysteine 85, and cysteine 88. The Mg(2+) site is built by aspartate 460, aspartate 462, and aspartate 464. Zn(2+) is bound by residues cysteine 825, cysteine 899, cysteine 906, and cysteine 909.

The protein belongs to the RNA polymerase beta' chain family. As to quaternary structure, the RNAP catalytic core consists of 2 alpha, 1 beta, 1 beta' and 1 omega subunit. When a sigma factor is associated with the core the holoenzyme is formed, which can initiate transcription. Requires Mg(2+) as cofactor. It depends on Zn(2+) as a cofactor.

The enzyme catalyses RNA(n) + a ribonucleoside 5'-triphosphate = RNA(n+1) + diphosphate. Functionally, DNA-dependent RNA polymerase catalyzes the transcription of DNA into RNA using the four ribonucleoside triphosphates as substrates. The chain is DNA-directed RNA polymerase subunit beta' from Nitrosomonas europaea (strain ATCC 19718 / CIP 103999 / KCTC 2705 / NBRC 14298).